A 341-amino-acid chain; its full sequence is Anthranilate phosphoribosyltransferase (341 aa).

Residues Gly81, Gly84–Asp85, Asn91–Thr94, Lys109–Ser117, and Ser121 each bind 5-phospho-alpha-D-ribose 1-diphosphate. Position 81 (Gly81) interacts with anthranilate. Ser93 contacts Mg(2+). Asn112 serves as a coordination point for anthranilate. Arg167 contributes to the anthranilate binding site. Mg(2+) is bound by residues Asp226 and Glu227.

It belongs to the anthranilate phosphoribosyltransferase family. In terms of assembly, homodimer. It depends on Mg(2+) as a cofactor.

The catalysed reaction is N-(5-phospho-beta-D-ribosyl)anthranilate + diphosphate = 5-phospho-alpha-D-ribose 1-diphosphate + anthranilate. The protein operates within amino-acid biosynthesis; L-tryptophan biosynthesis; L-tryptophan from chorismate: step 2/5. Functionally, catalyzes the transfer of the phosphoribosyl group of 5-phosphorylribose-1-pyrophosphate (PRPP) to anthranilate to yield N-(5'-phosphoribosyl)-anthranilate (PRA). The sequence is that of Anthranilate phosphoribosyltransferase from Saccharophagus degradans (strain 2-40 / ATCC 43961 / DSM 17024).